A 628-amino-acid chain; its full sequence is DNA mismatch repair protein MutL (628 aa).

Residues 350-402 (GLPFDVSESQGNDNHINNGKSRETKSERELYERRPNPFENRLMKESNSPSVGK) are disordered. Positions 356 to 368 (SESQGNDNHINNG) are enriched in polar residues. The segment covering 369 to 393 (KSRETKSERELYERRPNPFENRLMK) has biased composition (basic and acidic residues).

Belongs to the DNA mismatch repair MutL/HexB family.

Functionally, this protein is involved in the repair of mismatches in DNA. It is required for dam-dependent methyl-directed DNA mismatch repair. May act as a 'molecular matchmaker', a protein that promotes the formation of a stable complex between two or more DNA-binding proteins in an ATP-dependent manner without itself being part of a final effector complex. In Wolbachia sp. subsp. Brugia malayi (strain TRS), this protein is DNA mismatch repair protein MutL.